The following is an 88-amino-acid chain: Adenylosuccinate lyase (88 aa).

N(6)-(1,2-dicarboxyethyl)-AMP contacts are provided by residues Arg4–Tyr5 and Lys67–Asp69.

This sequence belongs to the lyase 1 family. Adenylosuccinate lyase subfamily. Homotetramer and homodimer. Residues from neighboring subunits contribute catalytic and substrate-binding residues to each active site.

It catalyses the reaction N(6)-(1,2-dicarboxyethyl)-AMP = fumarate + AMP. The catalysed reaction is (2S)-2-[5-amino-1-(5-phospho-beta-D-ribosyl)imidazole-4-carboxamido]succinate = 5-amino-1-(5-phospho-beta-D-ribosyl)imidazole-4-carboxamide + fumarate. The protein operates within purine metabolism; AMP biosynthesis via de novo pathway; AMP from IMP: step 2/2. It functions in the pathway purine metabolism; IMP biosynthesis via de novo pathway; 5-amino-1-(5-phospho-D-ribosyl)imidazole-4-carboxamide from 5-amino-1-(5-phospho-D-ribosyl)imidazole-4-carboxylate: step 2/2. In terms of biological role, catalyzes two reactions in de novo purine nucleotide biosynthesis. Catalyzes the breakdown of 5-aminoimidazole- (N-succinylocarboxamide) ribotide (SAICAR or 2-[5-amino-1-(5-phospho-beta-D-ribosyl)imidazole-4-carboxamido]succinate) to 5-aminoimidazole-4-carboxamide ribotide (AICAR or 5-amino-1-(5-phospho-beta-D-ribosyl)imidazole-4-carboxamide) and fumarate, and of adenylosuccinate (ADS or N(6)-(1,2-dicarboxyethyl)-AMP) to adenosine monophosphate (AMP) and fumarate. The sequence is that of Adenylosuccinate lyase (purB) from Spiroplasma citri.